The sequence spans 425 residues: 3-isopropylmalate dehydratase large subunit (425 aa).

Residues C305, C365, and C368 each contribute to the [4Fe-4S] cluster site.

This sequence belongs to the aconitase/IPM isomerase family. LeuC type 2 subfamily. Heterodimer of LeuC and LeuD. The cofactor is [4Fe-4S] cluster.

The catalysed reaction is (2R,3S)-3-isopropylmalate = (2S)-2-isopropylmalate. The protein operates within amino-acid biosynthesis; L-leucine biosynthesis; L-leucine from 3-methyl-2-oxobutanoate: step 2/4. Functionally, catalyzes the isomerization between 2-isopropylmalate and 3-isopropylmalate, via the formation of 2-isopropylmaleate. The sequence is that of 3-isopropylmalate dehydratase large subunit from Clostridioides difficile (strain 630) (Peptoclostridium difficile).